A 398-amino-acid chain; its full sequence is Ornithine aminotransferase (398 aa).

N6-(pyridoxal phosphate)lysine is present on Lys-256.

This sequence belongs to the class-III pyridoxal-phosphate-dependent aminotransferase family. OAT subfamily. Pyridoxal 5'-phosphate is required as a cofactor.

The protein resides in the cytoplasm. It carries out the reaction a 2-oxocarboxylate + L-ornithine = L-glutamate 5-semialdehyde + an L-alpha-amino acid. Its pathway is amino-acid biosynthesis; L-proline biosynthesis; L-glutamate 5-semialdehyde from L-ornithine: step 1/1. In terms of biological role, catalyzes the interconversion of ornithine to glutamate semialdehyde. The polypeptide is Ornithine aminotransferase (Halalkalibacterium halodurans (strain ATCC BAA-125 / DSM 18197 / FERM 7344 / JCM 9153 / C-125) (Bacillus halodurans)).